The primary structure comprises 330 residues: Probable transposase for insertion sequence element ISH11 (330 aa).

The protein belongs to the transposase 11 family.

Its function is as follows. Involved in the transposition of the insertion sequence ISH11. The sequence is that of Probable transposase for insertion sequence element ISH11 from Halobacterium salinarum (strain ATCC 29341 / DSM 671 / R1).